We begin with the raw amino-acid sequence, 450 residues long: SAGA complex/transcription factor TFIID complex subunit Taf12 (450 aa).

3 stretches are compositionally biased toward polar residues: residues 1–10 (MNGQHSSPGT), 19–29 (PVNQAQFSQQR), and 190–212 (QNRQ…NAST). 2 disordered regions span residues 1–29 (MNGQ…SQQR) and 190–281 (QNRQ…VEKS). Residues 217-236 (STASTPQLQQTQAQANAPQQ) show a composition bias toward low complexity. Polar residues-rich tracts occupy residues 237-246 (RINPETSSVP) and 255-281 (ANVS…VEKS). Ser297 carries the phosphoserine modification. The Histone-fold domain occupies 338-413 (NGNRLLSKRK…HLERNWNIRL (76 aa)). Residues 426–450 (RKTGPTPSYQQKQNAIGTAKSLNKD) are disordered. Polar residues predominate over residues 430–441 (PTPSYQQKQNAI).

It belongs to the TAF12 family. In terms of assembly, component of the 1.8 MDa SAGA (Spt-Ada-Gcn5 acetyltransferase) complex, which is composed of 19 subunits tra1, spt7, taf5, ngg1/ada3, sgf73, spt20, spt8, taf12, taf6, hfi1/ada1, ubp8, gcn5, ada2, spt3, sgf29, taf10, taf9, sgf11 and sus1. The SAGA complex is composed of 4 modules, namely the HAT (histone acetyltransferase) module (gcn5, ada2, ngg1/ada3 and sgf29), the DUB (deubiquitinating) module (ubp8, sgf11, sgf73 and sus1), the core or TAF (TBP-associated factor) module (taf5, taf6, taf9, taf10 and taf12), and the Tra1 or SPT (Suppressor of Ty) module (tra1, hfi1/ada1, spt3, spt7, spt8 and spt20). The Tra1/SPT module binds activators, the core module recruits TBP (TATA-binding protein), the HAT module contains the histone H3 acetyltransferase gcn5, and the DUB module comprises the histone H2B deubiquitinase ubp8. Component of the 1.2 MDa TFIID complex, which is composed of TATA-binding protein (TBP) and the 14 TBP-associated factors (TAFs). It comprises 1 copy of each taf1, taf2, taf3, taf7, taf8, taf11, taf13, 2 copies of each taf4, taf5, taf6, taf9, taf10, taf12, and 3 copies of taf14. In TFIID, taf12 heterodimerizes with taf4, forming ultimately an octamer consisting of a taf6-taf9 heterotetramer core flanked by taf4-taf12 dimers on either side, similar to the histone H2A-H2B-H3-H4 octamer.

It localises to the nucleus. Functions as a component of both the DNA-binding general transcription initiation factor complex TFIID and the transcription coactivator SAGA complex. Binding of TFIID to a promoter (with or without TATA element) is the initial step in pre-initiation complex (PIC) formation. TFIID plays a key role in the regulation of gene expression by RNA polymerase II through different activities such as transcription activator interaction, core promoter recognition and selectivity, TFIIA and TFIIB interaction, chromatin modification (histone acetylation by TAF1), facilitation of DNA opening and initiation of transcription. SAGA acts as a general cofactor required for essentially all RNA polymerase II transcription. At the promoters, SAGA is required for transcription pre-initiation complex (PIC) recruitment. It influences RNA polymerase II transcriptional activity through different activities such as TBP interaction (via core/TAF module) and promoter selectivity, interaction with transcription activators (via Tra1/SPT module), and chromatin modification through histone acetylation (via HAT module) and deubiquitination (via DUB module). SAGA preferentially acetylates histones H3 (to form H3K9ac, H3K14ac, H3K18ac and H3K23ac) and H2B and deubiquitinates histone H2B. SAGA interacts with DNA via upstream activating sequences (UASs). The chain is SAGA complex/transcription factor TFIID complex subunit Taf12 from Schizosaccharomyces pombe (strain 972 / ATCC 24843) (Fission yeast).